The chain runs to 912 residues: MLNTIVRKLVGSKNEREVKRMRKACEAINALEPTFEALDDASLTAKTAEFRQRLEAGESLDKLLPEAFAVVREASKRVMGMRHFDVQMVGGMTLHEGRIAEMKTGEGKTLVGTLAVYLNALTGKGVHVVTVNDYLASRDAEWMRPLYEFLGLSVGTIFSGQSSTQKREAYACDITYGTNNEFGFDYLRDNMAFSLDDKVQRSLHYAIIDEVDSILIDEARTPLIISGPVEENVDMYRRINQLSVQLEECSDEEDPTSGDFILDEKQKQVELTETGHQKLEGLLRDAEMLGQDDSLYSAQNLGLLQHVHSALRARHLYHRDVDYIVANGEVVIVDEHTGRTMHGRRWSEGLHQAVEAKEGVTIQKESQTLASTTFQNYFRLYDKLSGMTGTADTEAFEFRQIYGLDVMVIPTNRPLVRVDHNDLVYMSGEEKFEAIIEDVKTQREAGRPVLVGTASIETSEYLAKLMQQHQIPHNVLNAKQHQSEAEIISQAGRPGAVTIATNMAGRGTDIVLGGNWEAEAAALDDPSDEQIEALKAAWQERHDAVLAAGGLHVIGSERHESRRIDNQLRGRAGRQGDPGSTRFFLSLEDNLMRLFGSDRVQRLMQALGLEHGEAIEHKMVSNAVERAQKKVEGRNFDIRKQLLEYDDVSNDQRRVVYQQRDEVLAADDLSSNIAEIREQVLSEAISSYVPPQSLAEQWDLPGLQDYLKQEFNLDVPLVQWAEEDEHFHEELLRERLHDQHRGLFTSKAEAVGPELMRRFEKQVMLQVLDTRWKEHLQHMDHLRRGIHLRGYAQKNPKQEYKREAFELFQALLGNIKHDVIRILSHVQVRRQEEVDELERERRATLERERAVSQPVHEDAVASAEAVAESEEASGESADDAQPVRRDGPKVGRNDLCPCGSGKKYKHCHGKLN.

ATP-binding positions include Gln-87, Gly-105–Thr-109, and Asp-509. A compositionally biased stretch (basic and acidic residues) spans Arg-847–Ala-859. Positions Arg-847–Asn-912 are disordered. Residues Ala-867 to Asp-878 are compositionally biased toward acidic residues. Residues Gln-881–Arg-892 are compositionally biased toward basic and acidic residues. The Zn(2+) site is built by Cys-896, Cys-898, Cys-907, and His-908. Over residues Lys-902 to Asn-912 the composition is skewed to basic residues.

This sequence belongs to the SecA family. As to quaternary structure, monomer and homodimer. Part of the essential Sec protein translocation apparatus which comprises SecA, SecYEG and auxiliary proteins SecDF-YajC and YidC. It depends on Zn(2+) as a cofactor.

The protein localises to the cell inner membrane. The protein resides in the cytoplasm. The enzyme catalyses ATP + H2O + cellular proteinSide 1 = ADP + phosphate + cellular proteinSide 2.. In terms of biological role, part of the Sec protein translocase complex. Interacts with the SecYEG preprotein conducting channel. Has a central role in coupling the hydrolysis of ATP to the transfer of proteins into and across the cell membrane, serving both as a receptor for the preprotein-SecB complex and as an ATP-driven molecular motor driving the stepwise translocation of polypeptide chains across the membrane. The chain is Protein translocase subunit SecA from Chromohalobacter salexigens (strain ATCC BAA-138 / DSM 3043 / CIP 106854 / NCIMB 13768 / 1H11).